Consider the following 131-residue polypeptide: Heat shock protein 15 homolog (131 aa).

The region spanning V6–A67 is the S4 RNA-binding domain. Positions A98–E131 are disordered. Basic and acidic residues predominate over residues H108 to E131.

Belongs to the HSP15 family.

Involved in the recycling of free 50S ribosomal subunits that still carry a nascent chain. Binds RNA more specifically than DNA. Binds with very high affinity to the free 50S ribosomal subunit. Does not bind it when it is part of the 70S ribosome. The polypeptide is Heat shock protein 15 homolog (hslR) (Haemophilus influenzae (strain ATCC 51907 / DSM 11121 / KW20 / Rd)).